Here is a 469-residue protein sequence, read N- to C-terminus: Glutamate--tRNA ligase (469 aa).

The 'HIGH' region signature appears at 9 to 19; sequence PSPTGYLHVGG. The Zn(2+) site is built by Cys98, Cys100, Cys125, and Asp127. The 'KMSKS' region motif lies at 237 to 241; it reads KLSKR. Lys240 contributes to the ATP binding site.

The protein belongs to the class-I aminoacyl-tRNA synthetase family. Glutamate--tRNA ligase type 1 subfamily. In terms of assembly, monomer. It depends on Zn(2+) as a cofactor.

The protein localises to the cytoplasm. The enzyme catalyses tRNA(Glu) + L-glutamate + ATP = L-glutamyl-tRNA(Glu) + AMP + diphosphate. Catalyzes the attachment of glutamate to tRNA(Glu) in a two-step reaction: glutamate is first activated by ATP to form Glu-AMP and then transferred to the acceptor end of tRNA(Glu). The protein is Glutamate--tRNA ligase of Erwinia tasmaniensis (strain DSM 17950 / CFBP 7177 / CIP 109463 / NCPPB 4357 / Et1/99).